A 305-amino-acid chain; its full sequence is Coiled-coil domain-containing protein 69-A (305 aa).

A lipid anchor (N-myristoyl glycine) is attached at Gly2. The disordered stretch occupies residues 13 to 38 (LRKKKRQKAHQGGLTSQELNDLNAKT). Over residues 25–38 (GLTSQELNDLNAKT) the composition is skewed to polar residues. Positions 42 to 281 (NEVLQKIKEY…QREKEQNLYR (240 aa)) form a coiled coil.

Belongs to the CCDC69 family.

The protein localises to the cytoplasm. Its subcellular location is the cytoskeleton. The protein resides in the spindle. It is found in the midbody. Its function is as follows. May act as a scaffold to regulate the recruitment and assembly of spindle midzone components. The polypeptide is Coiled-coil domain-containing protein 69-A (ccdc69-a) (Xenopus laevis (African clawed frog)).